The chain runs to 225 residues: PKHD-type hydroxylase Smal_0990 (225 aa).

Residues 78 to 177 (KYLPPRFNRY…RVASFFWVQS (100 aa)) enclose the Fe2OG dioxygenase domain. Residues histidine 96, aspartate 98, and histidine 158 each contribute to the Fe cation site. Arginine 168 contributes to the 2-oxoglutarate binding site.

Fe(2+) is required as a cofactor. L-ascorbate serves as cofactor.

In Stenotrophomonas maltophilia (strain R551-3), this protein is PKHD-type hydroxylase Smal_0990.